Reading from the N-terminus, the 1231-residue chain is Fanconi anemia group J protein homolog (1231 aa).

Residues 11–448 (GGVKILFPCR…SDHEPLRAVC (438 aa)) enclose the Helicase ATP-binding domain. 46-53 (SPTGSGKS) lines the ATP pocket. 2 disordered regions span residues 104-126 (TFSSDRQMNSTDNAPSNISGASS) and 147-166 (QDDDFQTDRKRIRQSHDEQL). The span at 152–166 (QTDRKRIRQSHDEQL) shows a compositional bias: basic and acidic residues. Positions 155 to 173 (RKRIRQSHDEQLQARKRRC) match the Nuclear localization signal motif. [4Fe-4S] cluster-binding residues include Cys291, Cys304, Cys316, and Cys356. The DEAH box motif lies at 399 to 402 (DEAH). Over residues 890–903 (SKNQQQRMQMSSTN) the composition is skewed to polar residues. Disordered regions lie at residues 890–924 (SKNQQQRMQMSSTNCDDEPSQGTSSSSKNTSPTSS), 936–956 (VSEFTQPTSSTQSSVTSPPEI), and 1195–1231 (GNENAFNIGRNKGTEQKNRENRLSRSRNKGVSSFFLD). 2 stretches are compositionally biased toward low complexity: residues 909–924 (SQGTSSSSKNTSPTSS) and 940–954 (TQPTSSTQSSVTSPP). Over residues 1206 to 1217 (KGTEQKNRENRL) the composition is skewed to basic and acidic residues.

This sequence belongs to the DEAD box helicase family. DEAH subfamily. [4Fe-4S] cluster is required as a cofactor.

It is found in the nucleus. It carries out the reaction Couples ATP hydrolysis with the unwinding of duplex DNA at the replication fork by translocating in the 5'-3' direction. This creates two antiparallel DNA single strands (ssDNA). The leading ssDNA polymer is the template for DNA polymerase III holoenzyme which synthesizes a continuous strand.. It catalyses the reaction ATP + H2O = ADP + phosphate + H(+). Functionally, DNA-dependent helicase and 5' to 3' DNA helicase required for the maintenance of chromosomal stability. Involved in the repair of DNA double-strand breaks by homologous recombination. Involved in the repair of abasic sites at replication forks by promoting the degradation of DNA-protein cross-links: acts by catalyzing unfolding of HMCES DNA-protein cross-link via its helicase activity, exposing the underlying DNA and enabling cleavage of the DNA-protein adduct by the SPRTN metalloprotease. The sequence is that of Fanconi anemia group J protein homolog (brip1.L) from Xenopus laevis (African clawed frog).